The sequence spans 231 residues: Lipoprotein-releasing system ATP-binding protein LolD (231 aa).

Residues 6 to 230 (LSCKNVSKKY…DGELELVINS (225 aa)) form the ABC transporter domain. Position 42–49 (42–49 (GLSGSGKT)) interacts with ATP.

The protein belongs to the ABC transporter superfamily. Lipoprotein translocase (TC 3.A.1.125) family. As to quaternary structure, the complex is composed of two ATP-binding proteins (LolD) and two transmembrane proteins (LolC and LolE).

It localises to the cell inner membrane. In terms of biological role, part of the ABC transporter complex LolCDE involved in the translocation of mature outer membrane-directed lipoproteins, from the inner membrane to the periplasmic chaperone, LolA. Responsible for the formation of the LolA-lipoprotein complex in an ATP-dependent manner. In Francisella tularensis subsp. tularensis (strain FSC 198), this protein is Lipoprotein-releasing system ATP-binding protein LolD.